A 316-amino-acid polypeptide reads, in one-letter code: Ninja-family protein 2 (316 aa).

Disordered regions lie at residues 1–29 (MASRDFLGRFGGEKGSSSDKAGGGAGEPD) and 72–236 (TSDD…TSTG). Over residues 99–108 (ERWRRREMQS) the composition is skewed to basic and acidic residues. The span at 156–166 (DQGNTSSSMPE) shows a compositional bias: polar residues. 2 stretches are compositionally biased toward low complexity: residues 179–199 (SSMEISSDNNNNNNASNQNKS) and 222–235 (LRTLRSLTMRTTST).

Belongs to the Ninja family.

Its subcellular location is the nucleus. This Triticum aestivum (Wheat) protein is Ninja-family protein 2 (AFP-B1).